The primary structure comprises 248 residues: Small ribosomal subunit protein uS3 (248 aa).

In terms of domain architecture, KH type-2 spans 39–108 (IRKLVSQKLA…TVAVNVAEIP (70 aa)). Positions 212 to 248 (KTETLARPPRKSDERRREDGERPSRRRPTARRRPGGE) are disordered. The span at 221 to 234 (RKSDERRREDGERP) shows a compositional bias: basic and acidic residues. Positions 235–248 (SRRRPTARRRPGGE) are enriched in basic residues.

The protein belongs to the universal ribosomal protein uS3 family. As to quaternary structure, part of the 30S ribosomal subunit. Forms a tight complex with proteins S10 and S14.

Its function is as follows. Binds the lower part of the 30S subunit head. Binds mRNA in the 70S ribosome, positioning it for translation. This Deinococcus geothermalis (strain DSM 11300 / CIP 105573 / AG-3a) protein is Small ribosomal subunit protein uS3.